The sequence spans 503 residues: Activin receptor type-1-like (503 aa).

The N-terminal stretch at 1–21 (MTLGSPRRGLLMLLMALVTQG) is a signal peptide. The Extracellular portion of the chain corresponds to 22 to 118 (DPVKPSRGPL…PSEQPGTDGQ (97 aa)). Intrachain disulfides connect C34-C51, C36-C41, and C46-C69. The mediates specificity for BMP ligand stretch occupies residues 73-76 (HREL). 2 disulfides stabilise this stretch: C77-C89 and C90-C95. N-linked (GlcNAc...) asparagine glycosylation occurs at N98. The helical transmembrane segment at 119–141 (LALILGPVLALLALVALGVLGLW) threads the bilayer. The Cytoplasmic portion of the chain corresponds to 142-503 (HVRRRQEKQR…NSPEKPKVIQ (362 aa)). A phosphoserine mark is found at S155, S160, and S161. Positions 172–201 (SMLGDLLDSDCTTGSGSGLPFLVQRTVARQ) constitute a GS domain. The region spanning 202–492 (VALVECVGKG…LRIKKTLQKI (291 aa)) is the Protein kinase domain. Residues 208 to 216 (VGKGRYGEV) and K229 contribute to the ATP site. The active-site Proton acceptor is the D330.

It belongs to the protein kinase superfamily. TKL Ser/Thr protein kinase family. TGFB receptor subfamily. In terms of assembly, interacts with TSC22D1/TSC-22. Mg(2+) is required as a cofactor. It depends on Mn(2+) as a cofactor.

Its subcellular location is the cell membrane. The enzyme catalyses L-threonyl-[receptor-protein] + ATP = O-phospho-L-threonyl-[receptor-protein] + ADP + H(+). It catalyses the reaction L-seryl-[receptor-protein] + ATP = O-phospho-L-seryl-[receptor-protein] + ADP + H(+). Type I receptor for TGF-beta family ligands BMP9/GDF2 and BMP10 and important regulator of normal blood vessel development. On ligand binding, forms a receptor complex consisting of two type II and two type I transmembrane serine/threonine kinases. Type II receptors phosphorylate and activate type I receptors which autophosphorylate, then bind and activate SMAD transcriptional regulators. May bind activin as well. This Pongo abelii (Sumatran orangutan) protein is Activin receptor type-1-like (ACVRL1).